Reading from the N-terminus, the 264-residue chain is Accessory gland-specific peptide 26Aa (264 aa).

The signal sequence occupies residues 1 to 18; sequence MNQILLCSPILLLLFTVA. The segment at 1-138 is sufficient for promoting ovulation when expressed in females; it reads MNQILLCSPI…LQQRLLTEQN (138 aa). Residues Asn-88, Asn-122, Asn-138, and Asn-145 are each glycosylated (N-linked (GlcNAc...) asparagine). The segment at 189-219 is disordered; sequence LQNTRKSTKPCKKRSSKDSAPPAANQFQEAN. A compositionally biased stretch (basic residues) spans 194–203; sequence KSTKPCKKRS. Positions 219–264 are necessary and sufficient for homodimerization; it reads NVRNTYRNKYLTLLKELSQKINNEIAKVATDVPTETNPSQGNLPTL.

As to quaternary structure, homodimer. In terms of assembly, may form a homodimer. Post-translationally, glycosylation. In terms of processing, undergoes several cleavages as it is secreted and is further processed in the recipient female. The precursor molecule is proteolytically cleaved by the seminal metalloprotease Semp1 at Lys-48 to produce CP1-N and CP1-C. Cleaved at Lys-67 by Semp1 to generate CP2-N and CP2-C. Cleavage appears to take place in the mated female genital tract. Post-translationally, cleaved at Lys-117 by Semp1 to generate CP3-N and CP3-C. Cleavage appears to take place in the mated female genital tract. In terms of tissue distribution, produced in the male accessory glands and secreted into seminal fluid (at protein level). Detected in the main cells and secondary cells of the accessory glands of 1 day old males (at protein level). In 5 day old males, confined to the secondary cells and only reappears in the main cells after mating (at protein level). Produced in adult males 3-4 hr after eclosion, levels increase reaching a peak at day 3-5 which is maintained until at least day 10 of adulthood (at protein level). In unmated male adults, levels are maintained for the first 6 days of adulthood and then gradually decrease for at least the next 8 days. In mated females, detected in the genital tract 3 minutes after the start of mating (ASM) and is secreted into the female hemolymph via the posterior vaginal wall 5 minutes ASM (at protein level).

It is found in the secreted. The protein localises to the cytoplasm. In terms of biological role, male seminal protein which enhances ovulation in female Drosophila by stimulating the release of oocytes by the ovary following mating. Acts by increasing octopamine (OA) neuronal signaling in the female genital tract leading to the postmating relaxation of the oviduct muscles. This activation of the OA signaling pathway is likely to indirectly contribute to the mating-dependent increase in the number of OA synaptic sites in the female reproductive tract. Its function is as follows. Male seminal peptide which is able to enhance ovulation in female Drosophila. This is Accessory gland-specific peptide 26Aa from Drosophila melanogaster (Fruit fly).